Consider the following 32-residue polypeptide: Photosystem II reaction center protein T (32 aa).

A helical transmembrane segment spans residues 3-23 (ALVYTFLLIGTLMVIFFAVFF).

The protein belongs to the PsbT family. In terms of assembly, PSII is composed of 1 copy each of membrane proteins PsbA, PsbB, PsbC, PsbD, PsbE, PsbF, PsbH, PsbI, PsbJ, PsbK, PsbL, PsbM, PsbT, PsbX, PsbY, PsbZ, Psb30/Ycf12, at least 3 peripheral proteins of the oxygen-evolving complex and a large number of cofactors. It forms dimeric complexes.

It is found in the plastid. The protein localises to the chloroplast thylakoid membrane. Found at the monomer-monomer interface of the photosystem II (PS II) dimer, plays a role in assembly and dimerization of PSII. PSII is a light-driven water plastoquinone oxidoreductase, using light energy to abstract electrons from H(2)O, generating a proton gradient subsequently used for ATP formation. The protein is Photosystem II reaction center protein T of Trieres chinensis (Marine centric diatom).